The chain runs to 174 residues: ATP-dependent protease subunit HslV (174 aa).

The active site involves Thr-2. Na(+) is bound by residues Gly-157, Cys-160, and Thr-163.

This sequence belongs to the peptidase T1B family. HslV subfamily. A double ring-shaped homohexamer of HslV is capped on each side by a ring-shaped HslU homohexamer. The assembly of the HslU/HslV complex is dependent on binding of ATP.

The protein resides in the cytoplasm. The enzyme catalyses ATP-dependent cleavage of peptide bonds with broad specificity.. Its activity is regulated as follows. Allosterically activated by HslU binding. Functionally, protease subunit of a proteasome-like degradation complex believed to be a general protein degrading machinery. The polypeptide is ATP-dependent protease subunit HslV (Shewanella frigidimarina (strain NCIMB 400)).